We begin with the raw amino-acid sequence, 257 residues long: MLILLSCAKTMSDVSKTKTPLTTFPGFRKEAAEVALQMSQFSVEELERLLKVNPKIAVENYRRYQAFHSEGTRELPALLAYTGIVFKRVHPQDFSEEDFCYAQDHLRLTSFCYGLLRPLDMIRPYRLEGDVRLPEPGNRTMFDYWKPILTDRFIADIKKAGGVLCNLASDEMRGLFDWKRVEKEVRVITPEFHVWKNGKLATVVVYTKMSRGEMTRYILKNRIESVEQLKTFAWEGFEFNEQLSDETKYVFTNGKTE.

Belongs to the UPF0246 family.

The chain is UPF0246 protein BF3795 from Bacteroides fragilis (strain ATCC 25285 / DSM 2151 / CCUG 4856 / JCM 11019 / LMG 10263 / NCTC 9343 / Onslow / VPI 2553 / EN-2).